A 178-amino-acid chain; its full sequence is Alkyl hydroperoxide reductase AhpD (178 aa).

Cys-131 acts as the Proton donor in catalysis. Cys-131 and Cys-134 are oxidised to a cystine. The active-site Cysteine sulfenic acid (-SOH) intermediate is the Cys-134.

The protein belongs to the AhpD family. Homotrimer.

It catalyses the reaction N(6)-[(R)-dihydrolipoyl]-L-lysyl-[lipoyl-carrier protein] + a hydroperoxide = N(6)-[(R)-lipoyl]-L-lysyl-[lipoyl-carrier protein] + an alcohol + H2O. In terms of biological role, antioxidant protein with alkyl hydroperoxidase activity. Required for the reduction of the AhpC active site cysteine residues and for the regeneration of the AhpC enzyme activity. This chain is Alkyl hydroperoxide reductase AhpD, found in Streptomyces coelicolor (strain ATCC BAA-471 / A3(2) / M145).